A 462-amino-acid chain; its full sequence is MSPGQKEALPVADRTPPLGVEELHALVAAGDIDTVVLAFPDMQGRLQGKRFAARFFLDEVLEHGTEGCNYLLAVDADMNTVDGYAMSSWDRGYGDFAMRADPATLRRLPWNEGTAMAVADLAWEDGSPVLAAPRQILRRQLERLAGHGYTAQVGTELEFIVFRDTYEHAWDANYRGLTPANQYNVDYSVLGTGRVEPLLRRIRNEMAGAGLTVESAKGECNPGQHEIAFRYDEALVTCDQHAVYKTGAKEIAAQEGMSLTFMAKYNELEGNSCHIHLSLADADGRNAMAEGGGMSDVMRHFLAGQLVALREFSLLYAPHINSYKRFQPGSFAPTAVAWGHDNRTCALRVVGHGRSLRFENRLPGGDVNPYLAVAGLVAAGLHGIEQRLELPEPCPGNAYTADFAHVPTTLREAAELWENSTLAKAAFGDEVVAHYRNMARVELDAFDAAVTDWELRRSFERM.

The GS beta-grasp domain occupies 30–126; that stretch reads GDIDTVVLAF…AVADLAWEDG (97 aa). Positions 133–462 constitute a GS catalytic domain; that stretch reads PRQILRRQLE…WELRRSFERM (330 aa). Residues Glu-156 and Glu-158 each contribute to the Mg(2+) site. Glu-214 is a binding site for ATP. Residues Glu-219 and Glu-226 each contribute to the Mg(2+) site. Gly-270 provides a ligand contact to L-glutamate. Position 274 (His-274) interacts with Mg(2+). ATP is bound at residue 276 to 278; the sequence is HLS. Arg-325 and Arg-343 together coordinate L-glutamate. ATP is bound by residues Arg-343 and Arg-348. A Mg(2+)-binding site is contributed by Glu-359. Arg-361 serves as a coordination point for L-glutamate.

The protein belongs to the glutamine synthetase family. Requires Mg(2+) as cofactor.

It catalyses the reaction ethanolamine + L-glutamate + ATP = gamma-L-glutamylethanolamide + ADP + phosphate + H(+). The protein operates within amine and polyamine degradation; ethanolamine degradation. Its activity is regulated as follows. Very slightly decreased activity with glutamine synthetase (GS) inhibitor methionine sulfoximine (MSO). In terms of biological role, involved in the catabolism of monoamine ethanolamine. Catalyzes the ATP-dependent gamma-glutamylation of ethanolamine. No activity with polyamines. No complementation of the L-glutamine auxotrophy of an E.coli glnA mutant. Enables survival of S.coelicolor under high local environmental ethanolamine conditions. May play a role during starvation conditions to limit intracellular ethanolamine concentration, which in excess is toxic to the cells. The polypeptide is Gamma-glutamylethanolamide synthetase GlnA4 (Streptomyces coelicolor (strain ATCC BAA-471 / A3(2) / M145)).